Reading from the N-terminus, the 298-residue chain is Max-like protein X (298 aa).

A disordered region spans residues 1–63; the sequence is MTEPGASPED…PRGCREDSSH (63 aa). A Phosphoserine modification is found at serine 7. Residues 28-37 show a composition bias toward basic residues; sequence GRARARRGAG. 5 positions are modified to phosphoserine: serine 45, serine 48, serine 74, serine 77, and serine 98. The interval 91–145 is disordered; that stretch reads SVVSRANSIGSTSASSVPNTDDEDSDYHQEAYKESYKDRRRRAHTQAEQKRRDAI. Over residues 94-109 the composition is skewed to polar residues; the sequence is SRANSIGSTSASSVPN. Basic and acidic residues-rich tracts occupy residues 116 to 127 and 135 to 145; these read DYHQEAYKESYK and TQAEQKRRDAI. The region spanning 129-187 is the bHLH domain; it reads RRRRAHTQAEQKRRDAIKRGYDDLQTIVPTCQQQDFSIGSQKLSKAIVLQKTIDYIQFL. A leucine-zipper region spans residues 140-160; it reads KRRDAIKRGYDDLQTIVPTCQ.

In terms of assembly, efficient DNA binding requires dimerization with another bHLH protein. Binds DNA as a heterodimer with MAD1, MAD4, MNT, WBSCR14 and MLXIP. Can also bind DNA as a homodimer. As to expression, expressed in all tissues tested, including spleen, thymus, prostate, ovary, intestine, colon, peripheral blood leukocyte, heart, liver, skeletal muscle and kidney. Lower levels of expression in testis, brain, placenta and lung.

The protein localises to the cytoplasm. The protein resides in the nucleus. In terms of biological role, transcription regulator. Forms a sequence-specific DNA-binding protein complex with MAD1, MAD4, MNT, WBSCR14 and MLXIP which recognizes the core sequence 5'-CACGTG-3'. The TCFL4-MAD1, TCFL4-MAD4, TCFL4-WBSCR14 complexes are transcriptional repressors. Plays a role in transcriptional activation of glycolytic target genes. Involved in glucose-responsive gene regulation. The chain is Max-like protein X (MLX) from Homo sapiens (Human).